The following is a 1050-amino-acid chain: Probable E3 ubiquitin-protein ligase HERC3 (1050 aa).

RCC1 repeat units follow at residues 1 to 51 (MLCW…FLLE), 52 to 101 (DGEV…ALSD), 102 to 154 (RGQL…ALAA), 156 to 207 (GQFF…ALSL), 208 to 259 (SGAV…VLTK), 261 to 311 (GGVF…AFVP), and 313 to 366 (SGLI…IVKQ). The region spanning 951–1050 (YKGDYSATHP…LDNYEGFSLA (100 aa)) is the HECT domain. The Glycyl thioester intermediate role is filled by C1018.

In terms of processing, ubiquitinated; which promotes degradation by the proteasome.

It localises to the cytoplasm. The protein resides in the cytoplasmic vesicle. The catalysed reaction is S-ubiquitinyl-[E2 ubiquitin-conjugating enzyme]-L-cysteine + [acceptor protein]-L-lysine = [E2 ubiquitin-conjugating enzyme]-L-cysteine + N(6)-ubiquitinyl-[acceptor protein]-L-lysine.. It functions in the pathway protein modification; protein ubiquitination. E3 ubiquitin-protein ligase which accepts ubiquitin from an E2 ubiquitin-conjugating enzyme in the form of a thioester and then directly transfers the ubiquitin to targeted substrates. This chain is Probable E3 ubiquitin-protein ligase HERC3 (HERC3), found in Homo sapiens (Human).